Reading from the N-terminus, the 335-residue chain is MKKWFPAFLFLSLSGGNDALAGWHNVMFYAFNDYLTTNAGNVKVIDQPQLYIPWNTGSATATYYSCSGPEFASGVYFQEYLAWMVVPKHVYTNEGFNIFLDVQSKYGWSMENENDKDFYFFVNGYEWDTWTNNGARICFYPGNMKQLNNKFNDLVFRVLLPVDLPKGHYNFPVRYIRGIQHHYYDLWQDHYKMPYDQIKQLPATNTLMLSFDNVGGCQPSTQVLNIDHGSIVIDRANGNIASQTLSIYCDVPVSVKISLLRNTPPIYNNNKFSVGLGNGWDSIISLDGVEQSEEILRWYTAGSKTVKIESRLYGEEGKRKPGELSGSMTMVLSFP.

Positions 1–21 (MKKWFPAFLFLSLSGGNDALA) are cleaved as a signal peptide.

This sequence belongs to the adhesin PapG family. Interacts with chaperone PapD. Assembly of the P pilus requires periplasmic chaperone PapD, in absence of the chaperone overexpression of this subunit is toxic, where the protein accumulates in the periplasm. PapD stimulates release of PapG from an inner membrane-associated form (where at least 1 disulfide bond can form) into the periplasm and also helps it achieve its correct digalactoside-binding conformation. Contains disulfide bonds.

It localises to the secreted. The protein localises to the fimbrium. Functionally, tip adhesin component of type P pili that binds preferentially to host cell glycosphingolipids such as globotriaosylceramide. The sequence is that of Fimbrial adhesin PapGI from Escherichia coli.